The chain runs to 121 residues: Large ribosomal subunit protein uL14 (121 aa).

The protein belongs to the universal ribosomal protein uL14 family. As to quaternary structure, part of the 50S ribosomal subunit. Forms a cluster with proteins L3 and L19. In the 70S ribosome, L14 and L19 interact and together make contacts with the 16S rRNA in bridges B5 and B8.

Binds to 23S rRNA. Forms part of two intersubunit bridges in the 70S ribosome. In Prochlorococcus marinus (strain MIT 9313), this protein is Large ribosomal subunit protein uL14.